The chain runs to 197 residues: Imidazoleglycerol-phosphate dehydratase (197 aa).

It belongs to the imidazoleglycerol-phosphate dehydratase family.

It is found in the cytoplasm. The enzyme catalyses D-erythro-1-(imidazol-4-yl)glycerol 3-phosphate = 3-(imidazol-4-yl)-2-oxopropyl phosphate + H2O. It functions in the pathway amino-acid biosynthesis; L-histidine biosynthesis; L-histidine from 5-phospho-alpha-D-ribose 1-diphosphate: step 6/9. The sequence is that of Imidazoleglycerol-phosphate dehydratase from Pseudomonas entomophila (strain L48).